The sequence spans 178 residues: ATP synthase subunit delta (178 aa).

It belongs to the ATPase delta chain family. In terms of assembly, F-type ATPases have 2 components, F(1) - the catalytic core - and F(0) - the membrane proton channel. F(1) has five subunits: alpha(3), beta(3), gamma(1), delta(1), epsilon(1). F(0) has three main subunits: a(1), b(2) and c(10-14). The alpha and beta chains form an alternating ring which encloses part of the gamma chain. F(1) is attached to F(0) by a central stalk formed by the gamma and epsilon chains, while a peripheral stalk is formed by the delta and b chains.

It is found in the cell inner membrane. Functionally, f(1)F(0) ATP synthase produces ATP from ADP in the presence of a proton or sodium gradient. F-type ATPases consist of two structural domains, F(1) containing the extramembraneous catalytic core and F(0) containing the membrane proton channel, linked together by a central stalk and a peripheral stalk. During catalysis, ATP synthesis in the catalytic domain of F(1) is coupled via a rotary mechanism of the central stalk subunits to proton translocation. In terms of biological role, this protein is part of the stalk that links CF(0) to CF(1). It either transmits conformational changes from CF(0) to CF(1) or is implicated in proton conduction. This chain is ATP synthase subunit delta, found in Pseudomonas fluorescens (strain ATCC BAA-477 / NRRL B-23932 / Pf-5).